The chain runs to 473 residues: 3-isopropylmalate dehydratase large subunit (473 aa).

[4Fe-4S] cluster contacts are provided by cysteine 351, cysteine 414, and cysteine 417.

This sequence belongs to the aconitase/IPM isomerase family. LeuC type 1 subfamily. In terms of assembly, heterodimer of LeuC and LeuD. It depends on [4Fe-4S] cluster as a cofactor.

It carries out the reaction (2R,3S)-3-isopropylmalate = (2S)-2-isopropylmalate. It participates in amino-acid biosynthesis; L-leucine biosynthesis; L-leucine from 3-methyl-2-oxobutanoate: step 2/4. Its function is as follows. Catalyzes the isomerization between 2-isopropylmalate and 3-isopropylmalate, via the formation of 2-isopropylmaleate. The protein is 3-isopropylmalate dehydratase large subunit of Variovorax paradoxus (strain S110).